Here is a 212-residue protein sequence, read N- to C-terminus: Proteasome subunit beta 2 (212 aa).

The propeptide at 1 to 13 is removed in mature form; by autocatalysis; sequence MSVDEKVARALKG. The active-site Nucleophile is threonine 14.

This sequence belongs to the peptidase T1B family. In terms of assembly, the 20S proteasome core is composed of 14 alpha and 14 beta subunits that assemble into four stacked heptameric rings, resulting in a barrel-shaped structure. The two inner rings, each composed of seven catalytic beta subunits, are sandwiched by two outer rings, each composed of seven alpha subunits. The catalytic chamber with the active sites is on the inside of the barrel. Has a gated structure, the ends of the cylinder being occluded by the N-termini of the alpha-subunits. Is capped at one or both ends by the proteasome regulatory ATPase, PAN.

It localises to the cytoplasm. It carries out the reaction Cleavage of peptide bonds with very broad specificity.. Its activity is regulated as follows. The formation of the proteasomal ATPase PAN-20S proteasome complex, via the docking of the C-termini of PAN into the intersubunit pockets in the alpha-rings, triggers opening of the gate for substrate entry. Interconversion between the open-gate and close-gate conformations leads to a dynamic regulation of the 20S proteasome proteolysis activity. In terms of biological role, component of the proteasome core, a large protease complex with broad specificity involved in protein degradation. The protein is Proteasome subunit beta 2 of Ignicoccus hospitalis (strain KIN4/I / DSM 18386 / JCM 14125).